Reading from the N-terminus, the 432-residue chain is 7-dehydrocholesterol reductase (432 aa).

The next 9 membrane-spanning stretches (helical) occupy residues 12 to 34 (YASMLSLLAFCPPFVILLWYTMV), 64 to 86 (LIAWKIIFCYGAFEAILQLLLPG), 107 to 126 (LAAYFVTLATYLGLWWFGIF), 136 to 155 (GEIFSALIFGSFIFCVLLYI), 195 to 212 (FTNCRFGMMSWAVLAVTY), 227 to 249 (MLVNTILMLVYVTKFFWWEAGYW), 261 to 283 (FYICWGCLVWVPSVYTSPGMYLV), 287 to 309 (VELGTQLAIYILVAGILCIYINY), and 371 to 393 (SAFFWTVPALFDNFLAYFYVIFL).

The protein belongs to the ERG4/ERG24 family.

The protein resides in the endoplasmic reticulum membrane. The catalysed reaction is cholesterol + NADP(+) = 7-dehydrocholesterol + NADPH + H(+). It participates in lipid metabolism; steroid biosynthesis. In terms of biological role, production of cholesterol by reduction of C7-C8 double bond of 7-dehydrocholesterol (7-DHC). Lesions in the gene coding for the enzyme cause dwarfism. This is 7-dehydrocholesterol reductase (DWF5) from Arabidopsis thaliana (Mouse-ear cress).